Reading from the N-terminus, the 500-residue chain is Probable malate:quinone oxidoreductase (500 aa).

This sequence belongs to the MQO family. FAD serves as cofactor.

It catalyses the reaction (S)-malate + a quinone = a quinol + oxaloacetate. It functions in the pathway carbohydrate metabolism; tricarboxylic acid cycle; oxaloacetate from (S)-malate (quinone route): step 1/1. In Corynebacterium aurimucosum (strain ATCC 700975 / DSM 44827 / CIP 107346 / CN-1) (Corynebacterium nigricans), this protein is Probable malate:quinone oxidoreductase.